The sequence spans 139 residues: MEWAKWTPHEASNQTQASTLLGLLLGDHTEGRNDTNSTRALKVPDGTSAAWYILTIIGIYAVIFVFRLASNILRKNDKSLEDVYYSNLTSELKMTGLQGKVAKCSTLSISNRAVLQPCQAHLGAKGGSSGPQTATPETP.

A helical membrane pass occupies residues 46-66 (GTSAAWYILTIIGIYAVIFVF).

It is found in the membrane. This is Small integral membrane protein 34 from Homo sapiens (Human).